We begin with the raw amino-acid sequence, 361 residues long: Replication factor C subunit 3 (361 aa).

Low complexity predominate over residues 1-28 (MAGATAATPMDIDAAAPPPGAAAKGKAP). A disordered region spans residues 1 to 39 (MAGATAATPMDIDAAAPPPGAAAKGKAPLSSTPGGRAAP). 77-84 (YGPPGTGK) contacts ATP.

The protein belongs to the activator 1 small subunits family. Heterotetramer of subunits RFC2, RFC3, RFC4 and RFC5 that can form a complex with RFC1. Expressed in roots, leaves, shoot apical meristem (SAM), flag leaves and panicles.

The protein resides in the nucleus. Its function is as follows. May be involved in DNA replication and thus regulate cell proliferation. This is Replication factor C subunit 3 (RFC3) from Oryza sativa subsp. japonica (Rice).